A 179-amino-acid chain; its full sequence is Large ribosomal subunit protein uL5c (179 aa).

It belongs to the universal ribosomal protein uL5 family. As to quaternary structure, part of the 50S ribosomal subunit; contacts the 5S rRNA.

The protein localises to the plastid. It is found in the organellar chromatophore. Binds 5S rRNA, forms part of the central protuberance of the 50S subunit. In Paulinella chromatophora, this protein is Large ribosomal subunit protein uL5c (rpl5).